Here is an 88-residue protein sequence, read N- to C-terminus: Small ribosomal subunit protein uS15c (88 aa).

It belongs to the universal ribosomal protein uS15 family. In terms of assembly, part of the 30S ribosomal subunit.

The protein localises to the plastid. The protein resides in the chloroplast. In Pinus koraiensis (Korean pine), this protein is Small ribosomal subunit protein uS15c (rps15).